We begin with the raw amino-acid sequence, 180 residues long: Large ribosomal subunit protein uL5 (180 aa).

Belongs to the universal ribosomal protein uL5 family. As to quaternary structure, part of the 50S ribosomal subunit; part of the 5S rRNA/L5/L18/L25 subcomplex. Contacts the 5S rRNA and the P site tRNA. Forms a bridge to the 30S subunit in the 70S ribosome.

This is one of the proteins that bind and probably mediate the attachment of the 5S RNA into the large ribosomal subunit, where it forms part of the central protuberance. In the 70S ribosome it contacts protein S13 of the 30S subunit (bridge B1b), connecting the 2 subunits; this bridge is implicated in subunit movement. Contacts the P site tRNA; the 5S rRNA and some of its associated proteins might help stabilize positioning of ribosome-bound tRNAs. This is Large ribosomal subunit protein uL5 from Chlamydia trachomatis serovar L2 (strain ATCC VR-902B / DSM 19102 / 434/Bu).